The sequence spans 115 residues: Alpha-endosulfine (115 aa).

Positions 1-10 (MSSENLSDTQ) are enriched in polar residues. Residues 1–27 (MSSENLSDTQMEYEDEKQDSQEKNANL) are disordered. S65 bears the Phosphoserine; by GWL mark. The disordered stretch occupies residues 77–115 (NKQLPVAGPDKNLVTGDHIPTPQDLPQRRSSLVTSKLAG). Residues 104 to 115 (RRSSLVTSKLAG) are compositionally biased toward polar residues.

This sequence belongs to the endosulfine family. In terms of processing, phosphorylation at Ser-65 by gwl during mitosis is essential for interaction with ppp2r2d (PR55-delta) and subsequent inactivation of PP2A.

The protein resides in the cytoplasm. In terms of biological role, protein phosphatase inhibitor that specifically inhibits protein phosphatase 2A (PP2A) during mitosis. When phosphorylated at Ser-67 during mitosis, specifically interacts with ppp2r2d (PR55-delta) and inhibits its activity, leading to inactivation of PP2A, an essential condition to keep cyclin-B1-CDK1 activity high during M phase. The protein is Alpha-endosulfine (ensa) of Salmo salar (Atlantic salmon).